The chain runs to 378 residues: UPF0754 membrane protein Exig_0680 (378 aa).

A run of 2 helical transmembrane segments spans residues 5-25 and 357-377; these read VDLV…GAVT and ITWL…ILLI.

This sequence belongs to the UPF0754 family.

The protein localises to the cell membrane. This chain is UPF0754 membrane protein Exig_0680, found in Exiguobacterium sibiricum (strain DSM 17290 / CCUG 55495 / CIP 109462 / JCM 13490 / 255-15).